The following is a 285-amino-acid chain: Pseudouridine-5'-phosphate glycosidase (285 aa).

Glutamate 17 acts as the Proton donor in catalysis. Lysine 77 and valine 97 together coordinate substrate. Aspartate 126 contacts Mn(2+). 128–130 (SQD) provides a ligand contact to substrate. The active-site Nucleophile is the lysine 147.

The protein belongs to the pseudouridine-5'-phosphate glycosidase family. In terms of assembly, homotrimer. Mn(2+) is required as a cofactor.

The catalysed reaction is D-ribose 5-phosphate + uracil = psi-UMP + H2O. Functionally, catalyzes the reversible cleavage of pseudouridine 5'-phosphate (PsiMP) to ribose 5-phosphate and uracil. Functions biologically in the cleavage direction, as part of a pseudouridine degradation pathway. The chain is Pseudouridine-5'-phosphate glycosidase from Thermotoga maritima (strain ATCC 43589 / DSM 3109 / JCM 10099 / NBRC 100826 / MSB8).